Here is a 692-residue protein sequence, read N- to C-terminus: Vacuolar amino acid transporter 3 (692 aa).

Polar residues predominate over residues Met-1–Gln-14. Positions Met-1–Leu-71 are disordered. Residues Ser-15–Gly-24 show a composition bias toward low complexity. Residues Gly-28 to Thr-38 are compositionally biased toward polar residues. Phosphoserine is present on residues Ser-59, Ser-119, and Ser-121. 2 disordered regions span residues Lys-135–Lys-170 and Asp-258–Pro-294. Over residues Pro-141–Pro-153 the composition is skewed to low complexity. A compositionally biased stretch (polar residues) spans Ala-154–Ser-167. The residue at position 165 (Ser-165) is a Phosphoserine. Acidic residues predominate over residues Asp-258–Glu-279. Helical transmembrane passes span Ala-302–Phe-322, Phe-329–Ile-349, Phe-374–Phe-394, Gly-412–Leu-432, Ala-443–Tyr-463, Trp-483–Ile-503, Ala-519–Phe-539, Val-561–Ile-581, Tyr-607–Leu-627, Phe-630–Leu-650, and Leu-665–Gln-685.

This sequence belongs to the amino acid/polyamine transporter 2 family.

Its subcellular location is the vacuole membrane. In terms of biological role, involved in amino acid efflux from the vacuole to the cytoplasm. Capable of transporting large neutral amino acids including tyrosine, glutamine, asparagine, isoleucine and leucine. This Saccharomyces cerevisiae (strain ATCC 204508 / S288c) (Baker's yeast) protein is Vacuolar amino acid transporter 3 (AVT3).